Here is a 498-residue protein sequence, read N- to C-terminus: Lysine--tRNA ligase (498 aa).

Mg(2+) is bound by residues E407 and E414.

It belongs to the class-II aminoacyl-tRNA synthetase family. Homodimer. The cofactor is Mg(2+).

It localises to the cytoplasm. The enzyme catalyses tRNA(Lys) + L-lysine + ATP = L-lysyl-tRNA(Lys) + AMP + diphosphate. This is Lysine--tRNA ligase from Rhizobium etli (strain CIAT 652).